We begin with the raw amino-acid sequence, 363 residues long: MEALVVDAGSKFLKAGAAIPDQSPAMIIPSQMKRMVDDGSSSADNPTTVFEDVTLDPIERGLIRDWDAMEDLLRYVVYTGLGWEEGNEGNILFTDPLCTPKAIREQLVQLMFETFNVSGFYASEQAVLSLYAVGRISGCTVDIGHGKIDIAPVLEGAVQHIASKRFELGGTELTKLFAQELGKTNPSMNLSMSDVEKLKEQYANCAEDEIAYKKTQNCEIEQHTLPDGQVISIGRERYSVGEALFQPSILGLEEHGIVEQLVRIISTVSSENHRQLLENTVLCGGTTSMTGFESRFQKEANLCSSAIRPTLVKPPEYMPENLGMYSAWVGGAILAKVVFPQNQHVTKADYDETGPSVVHRKCF.

Met-1 bears the N-acetylmethionine mark.

Belongs to the actin family. Plant ARP7 subfamily. In terms of tissue distribution, mostly expressed in flowers, and, to a lower extent, in roots, seedlings, leaves and siliques (at protein level).

The protein resides in the nucleus. Its subcellular location is the cytoplasm. Essential protein required during embryogenesis and all plant development stages, probably through a chromatin-mediated regulation of gene expression. The chain is Actin-related protein 7 (ARP7) from Arabidopsis thaliana (Mouse-ear cress).